A 221-amino-acid polypeptide reads, in one-letter code: Nuclear phosphoprotein UL3 homolog (221 aa).

This sequence belongs to the alphaherpesvirinae HHV-1 UL3 family. Phosphorylated.

The protein resides in the host nucleus. The protein is Nuclear phosphoprotein UL3 homolog of Varicella-zoster virus (strain Oka vaccine) (HHV-3).